We begin with the raw amino-acid sequence, 292 residues long: Acetylglutamate kinase (292 aa).

Substrate-binding positions include 64 to 65 (GG), Arg-86, and Asn-190.

Belongs to the acetylglutamate kinase family. ArgB subfamily.

The protein resides in the cytoplasm. It carries out the reaction N-acetyl-L-glutamate + ATP = N-acetyl-L-glutamyl 5-phosphate + ADP. The protein operates within amino-acid biosynthesis; L-arginine biosynthesis; N(2)-acetyl-L-ornithine from L-glutamate: step 2/4. Functionally, catalyzes the ATP-dependent phosphorylation of N-acetyl-L-glutamate. The chain is Acetylglutamate kinase from Leptospira biflexa serovar Patoc (strain Patoc 1 / Ames).